Here is a 253-residue protein sequence, read N- to C-terminus: Tryptophan synthase alpha chain (253 aa).

Active-site proton acceptor residues include E47 and D58.

The protein belongs to the TrpA family. In terms of assembly, tetramer of two alpha and two beta chains.

The enzyme catalyses (1S,2R)-1-C-(indol-3-yl)glycerol 3-phosphate + L-serine = D-glyceraldehyde 3-phosphate + L-tryptophan + H2O. It participates in amino-acid biosynthesis; L-tryptophan biosynthesis; L-tryptophan from chorismate: step 5/5. The alpha subunit is responsible for the aldol cleavage of indoleglycerol phosphate to indole and glyceraldehyde 3-phosphate. This is Tryptophan synthase alpha chain from Desulforapulum autotrophicum (strain ATCC 43914 / DSM 3382 / VKM B-1955 / HRM2) (Desulfobacterium autotrophicum).